Reading from the N-terminus, the 140-residue chain is ATP synthase epsilon chain (140 aa).

This sequence belongs to the ATPase epsilon chain family. F-type ATPases have 2 components, CF(1) - the catalytic core - and CF(0) - the membrane proton channel. CF(1) has five subunits: alpha(3), beta(3), gamma(1), delta(1), epsilon(1). CF(0) has three main subunits: a, b and c.

It localises to the cell inner membrane. In terms of biological role, produces ATP from ADP in the presence of a proton gradient across the membrane. In Nitrosomonas eutropha (strain DSM 101675 / C91 / Nm57), this protein is ATP synthase epsilon chain.